A 570-amino-acid polypeptide reads, in one-letter code: Probable metalloreductase AIM14 (570 aa).

The next 7 helical transmembrane spans lie at 21–41 (IKYG…LALL), 70–90 (AIHL…HYSL), 101–118 (LGRL…LTLR), 142–162 (IITV…AIDD), 177–197 (FVGF…IGPM), 204–224 (LFYI…PIHS), and 230–250 (FPFL…RIVF). A Ferric oxidoreductase domain is found at 101 to 219 (LGRLSYALIP…NLVNVAFILL (119 aa)). An FAD-binding FR-type domain is found at 250–388 (FAKSLMILNK…GGSGISFALP (139 aa)). Residues 481-505 (SNFNSENADSNDNTPETSHSPTKEN) are compositionally biased toward polar residues. Residues 481–507 (SNFNSENADSNDNTPETSHSPTKENGS) form a disordered region.

Belongs to the ferric reductase (FRE) family. AIM14 subfamily. Interacts with ribosomes.

Its subcellular location is the membrane. In terms of biological role, probable cell surface metalloreductase. May be involved in iron or copper homeostasis. The polypeptide is Probable metalloreductase AIM14 (AIM14) (Saccharomyces cerevisiae (strain RM11-1a) (Baker's yeast)).